The chain runs to 306 residues: Cilia- and flagella-associated protein 73 (306 aa).

Coiled-coil stretches lie at residues 49–139 (LQAQ…QRLE) and 197–231 (QSEK…WESK).

This sequence belongs to the CFAP73 family.

The protein resides in the cytoplasm. The protein localises to the cytoskeleton. It is found in the cilium axoneme. In terms of biological role, may play a role in ciliary/flagellar motility by regulating the assembly and the activity of axonemal inner dynein arm. This Mus musculus (Mouse) protein is Cilia- and flagella-associated protein 73.